A 170-amino-acid chain; its full sequence is Protein SprT (170 aa).

The 143-residue stretch at 23–165 folds into the SprT-like domain; sequence QLANQHLGTD…RECGEKLQFV (143 aa). Residue H78 coordinates Zn(2+). The active site involves E79. Residue H82 participates in Zn(2+) binding.

This sequence belongs to the SprT family. It depends on Zn(2+) as a cofactor.

The protein localises to the cytoplasm. In Yersinia enterocolitica serotype O:8 / biotype 1B (strain NCTC 13174 / 8081), this protein is Protein SprT.